A 1309-amino-acid chain; its full sequence is Phospholipase A I (1309 aa).

LRR repeat units lie at residues 155 to 178 (LPLL…IGKL), 180 to 201 (NLKI…LRQC), 203 to 223 (GLVE…DFRA), and 224 to 248 (MAGL…PLHQ). 3 ARM repeats span residues 315-356 (DEGN…SLAR), 401-439 (SVSQ…NLAF), and 440-481 (CLEN…ILGE). The 245-residue stretch at 502–746 (LTMDGGGMKG…VANNPTIFAI (245 aa)) folds into the PNPLA domain. Residues 506-511 (GGGMKG) carry the GXGXXG motif. Positions 538–542 (GTSTG) match the GXSXG motif. The active-site Nucleophile is the Ser-540. Asp-733 acts as the Proton acceptor in catalysis. Residues 733 to 735 (DGA) carry the DGA/G motif. Residues 1183–1253 (VIGPSNEPQE…EDSDHEKTNR (71 aa)) form a disordered region. A compositionally biased stretch (polar residues) spans 1188-1208 (NEPQETPLITSQGSSEYNIGD). Residues 1216–1235 (GEEEDEDEEVNEETEREEME) are compositionally biased toward acidic residues.

Belongs to the patatin family.

The protein localises to the plastid. Its subcellular location is the chloroplast. Functionally, possesses non-specific lipolytic acyl hydrolase (LAH) activity. Catalyzes the hydrolysis of the galactolipids monogalactosyldiacylglycerol (MGDG) and digalactosyldiacylglycerol (DGDG), and less efficiently the phoshpolipids phosphatidylcholine (PC), phosphatidylethanolamine (PE), phosphatidylglycerol (PG), phosphatidylserine (PS) and phosphatidylinositol (PI). Hydrolyzes phospholipids at both the sn-1 and sn-2 positions. Involved in basal jasmonic acid production and promotes resistance to the necrotrophic fungal pathogen Botrytis cinerea. In Arabidopsis thaliana (Mouse-ear cress), this protein is Phospholipase A I (PLA1).